Reading from the N-terminus, the 358-residue chain is tRNA-specific 2-thiouridylase MnmA (358 aa).

ATP is bound by residues L22–S29 and F48. Residue C105 is the Nucleophile of the active site. A disulfide bridge links C105 with C201. G129 lines the ATP pocket. Residues K151–Q153 are interaction with tRNA. C201 (cysteine persulfide intermediate) is an active-site residue. The interval R306–Y307 is interaction with tRNA.

The protein belongs to the MnmA/TRMU family.

The protein localises to the cytoplasm. It catalyses the reaction S-sulfanyl-L-cysteinyl-[protein] + uridine(34) in tRNA + AH2 + ATP = 2-thiouridine(34) in tRNA + L-cysteinyl-[protein] + A + AMP + diphosphate + H(+). In terms of biological role, catalyzes the 2-thiolation of uridine at the wobble position (U34) of tRNA, leading to the formation of s(2)U34. This chain is tRNA-specific 2-thiouridylase MnmA, found in Desulfosudis oleivorans (strain DSM 6200 / JCM 39069 / Hxd3) (Desulfococcus oleovorans).